Consider the following 494-residue polypeptide: Alpha-amylase-related protein (494 aa).

An N-terminal signal peptide occupies residues 1–20; the sequence is MIKFALALTLCLAGASLSLA. A Pyrrolidone carboxylic acid modification is found at Gln-21. A disulfide bridge links Cys-48 with Cys-104. Positions 118, 169, and 178 each coordinate Ca(2+). An intrachain disulfide couples Cys-157 to Cys-171. A chloride-binding site is contributed by Arg-206. Catalysis depends on Asp-208, which acts as the Nucleophile. His-212 is a binding site for Ca(2+). Glu-245 serves as the catalytic Proton donor. Residues Asn-308 and Arg-343 each coordinate chloride. 3 disulfide bridges follow: Cys-376/Cys-382, Cys-418/Cys-441, and Cys-448/Cys-460.

Belongs to the glycosyl hydrolase 13 family. As to quaternary structure, monomer. The cofactor is Ca(2+). Chloride serves as cofactor.

It localises to the secreted. It catalyses the reaction Endohydrolysis of (1-&gt;4)-alpha-D-glucosidic linkages in polysaccharides containing three or more (1-&gt;4)-alpha-linked D-glucose units.. This is Alpha-amylase-related protein (Amyrel) from Drosophila kikkawai (Fruit fly).